The primary structure comprises 379 residues: Cytochrome b (379 aa).

Helical transmembrane passes span 33–53 (FGSL…FLAM), 77–98 (WLIR…FIHV), 113–133 (WNIG…GYVL), and 178–198 (FFAF…VHLL). The heme b site is built by H83 and H97. Residues H182 and H196 each coordinate heme b. H201 lines the a ubiquinone pocket. The next 4 helical transmembrane spans lie at 226–246 (TKDL…ALFF), 288–308 (LGGV…PLLN), 320–340 (VTQV…WIGG), and 347–367 (FTTI…ILIP).

Belongs to the cytochrome b family. As to quaternary structure, the cytochrome bc1 complex contains 11 subunits: 3 respiratory subunits (MT-CYB, CYC1 and UQCRFS1), 2 core proteins (UQCRC1 and UQCRC2) and 6 low-molecular weight proteins (UQCRH/QCR6, UQCRB/QCR7, UQCRQ/QCR8, UQCR10/QCR9, UQCR11/QCR10 and a cleavage product of UQCRFS1). This cytochrome bc1 complex then forms a dimer. The cofactor is heme b.

It localises to the mitochondrion inner membrane. In terms of biological role, component of the ubiquinol-cytochrome c reductase complex (complex III or cytochrome b-c1 complex) that is part of the mitochondrial respiratory chain. The b-c1 complex mediates electron transfer from ubiquinol to cytochrome c. Contributes to the generation of a proton gradient across the mitochondrial membrane that is then used for ATP synthesis. This Akodon montensis (Montane grass mouse) protein is Cytochrome b (MT-CYB).